Consider the following 559-residue polypeptide: Proline--tRNA ligase (559 aa).

It belongs to the class-II aminoacyl-tRNA synthetase family. ProS type 1 subfamily. In terms of assembly, homodimer.

Its subcellular location is the cytoplasm. It catalyses the reaction tRNA(Pro) + L-proline + ATP = L-prolyl-tRNA(Pro) + AMP + diphosphate. Functionally, catalyzes the attachment of proline to tRNA(Pro) in a two-step reaction: proline is first activated by ATP to form Pro-AMP and then transferred to the acceptor end of tRNA(Pro). As ProRS can inadvertently accommodate and process non-cognate amino acids such as alanine and cysteine, to avoid such errors it has two additional distinct editing activities against alanine. One activity is designated as 'pretransfer' editing and involves the tRNA(Pro)-independent hydrolysis of activated Ala-AMP. The other activity is designated 'posttransfer' editing and involves deacylation of mischarged Ala-tRNA(Pro). The misacylated Cys-tRNA(Pro) is not edited by ProRS. The protein is Proline--tRNA ligase of Ruthia magnifica subsp. Calyptogena magnifica.